The following is a 314-amino-acid chain: uncharacterized protein (314 aa).

Residues 1 to 26 form the signal peptide; that stretch reads MRGRVAGSCAPLGLLLVCLRLPGLFA. Positions 41 to 60 are enriched in polar residues; it reads GTNLPQLGQPSLTGPPNSEH. 4 disordered regions span residues 41–65, 77–96, 147–191, and 292–314; these read GTNL…QPAL, LKLS…SAVQ, GSGP…GKIL, and PPGS…LQWG. The segment covering 147–157 has biased composition (low complexity); the sequence is GSGPLPGESSP. Positions 167-177 are enriched in basic and acidic residues; that stretch reads SHLHQDSESRR. Over residues 303–314 the composition is skewed to pro residues; the sequence is FPNPPSPGLQWG.

In terms of assembly, binds to numerous extracellular matrix proteins. Taste cell specific.

It is found in the secreted. The protein localises to the extracellular space. It localises to the extracellular matrix. This is an uncharacterized protein from Macaca mulatta (Rhesus macaque).